The chain runs to 308 residues: Glycerol-3-phosphate dehydrogenase [NAD(P)+] (308 aa).

4 residues coordinate NADPH: tryptophan 15, arginine 35, arginine 36, and lysine 83. Sn-glycerol 3-phosphate contacts are provided by lysine 83 and glycine 111. Serine 115 contacts NADPH. Sn-glycerol 3-phosphate contacts are provided by lysine 166, aspartate 219, serine 229, arginine 230, and asparagine 231. Residue lysine 166 is the Proton acceptor of the active site. Arginine 230 provides a ligand contact to NADPH. Glutamate 256 provides a ligand contact to NADPH.

Belongs to the NAD-dependent glycerol-3-phosphate dehydrogenase family.

The protein localises to the cytoplasm. It catalyses the reaction sn-glycerol 3-phosphate + NAD(+) = dihydroxyacetone phosphate + NADH + H(+). It carries out the reaction sn-glycerol 3-phosphate + NADP(+) = dihydroxyacetone phosphate + NADPH + H(+). The protein operates within membrane lipid metabolism; glycerophospholipid metabolism. In terms of biological role, catalyzes the reduction of the glycolytic intermediate dihydroxyacetone phosphate (DHAP) to sn-glycerol 3-phosphate (G3P), the key precursor for phospholipid synthesis. In Synechococcus elongatus (strain ATCC 33912 / PCC 7942 / FACHB-805) (Anacystis nidulans R2), this protein is Glycerol-3-phosphate dehydrogenase [NAD(P)+].